A 159-amino-acid chain; its full sequence is Transcriptional repressor NrdR (159 aa).

Over residues 1–11 the composition is skewed to polar residues; sequence MQCPTCQNTDS. A disordered region spans residues 1 to 21; that stretch reads MQCPTCQNTDSRVLESRSADS. The segment at 3-34 is a zinc-finger region; it reads CPTCQNTDSRVLESRSADSGKSVRRRRECLNC. Positions 49 to 139 constitute an ATP-cone domain; the sequence is VSVMKKDGSR…VYRKFNGVKD (91 aa).

This sequence belongs to the NrdR family. Zn(2+) serves as cofactor.

Functionally, negatively regulates transcription of bacterial ribonucleotide reductase nrd genes and operons by binding to NrdR-boxes. In Prochlorococcus marinus (strain MIT 9215), this protein is Transcriptional repressor NrdR.